Here is a 518-residue protein sequence, read N- to C-terminus: Bifunctional methyltransferase (518 aa).

Positions 1 to 300 (MQYSIKQILN…SHNRVIEISP (300 aa)) are hemK. Residues 1–302 (MQYSIKQILN…NRVIEISPIN (302 aa)) are RF MTase. Residues 140–144 (GTGSG), aspartate 163, tryptophan 192, asparagine 207, glutamate 347, glutamate 372, asparagine 399, and aspartate 421 each bind S-adenosyl-L-methionine. Residue 207–210 (NPPY) coordinates substrate. Residues 301–518 (INLNRSYARR…MILQHALTGH (218 aa)) form a tRNA (guanine-N(7)-)-methyltransferase region. Residues 305–518 (RSYARRIGKS…MILQHALTGH (214 aa)) form a tRNA MTase region. The active site involves aspartate 421. 2 residues coordinate substrate: lysine 425 and aspartate 457.

It in the C-terminal section; belongs to the class I-like SAM-binding methyltransferase superfamily. TrmB family. This sequence in the N-terminal section; belongs to the protein N5-glutamine methyltransferase family. PrmC subfamily.

The enzyme catalyses L-glutaminyl-[peptide chain release factor] + S-adenosyl-L-methionine = N(5)-methyl-L-glutaminyl-[peptide chain release factor] + S-adenosyl-L-homocysteine + H(+). The catalysed reaction is guanosine(46) in tRNA + S-adenosyl-L-methionine = N(7)-methylguanosine(46) in tRNA + S-adenosyl-L-homocysteine. In terms of biological role, methylates the class 1 translation termination release factors RF1/PrfA and RF2/PrfB on the glutamine residue of the universally conserved GGQ motif. Catalyzes the formation of N(7)-methylguanine at position 46 (m7G46) in tRNA. This is Bifunctional methyltransferase (prmC/trmB) from Rickettsia typhi (strain ATCC VR-144 / Wilmington).